Consider the following 223-residue polypeptide: UPF0441 protein YgiB (223 aa).

Low complexity predominate over residues 178–195; sequence TVPKTAMAPKPATTTTVT. Residues 178 to 223 are disordered; sequence TVPKTAMAPKPATTTTVTRGGFGESVAKQSTMQRSAAGTSTRSMGG. A compositionally biased stretch (polar residues) spans 204–223; sequence AKQSTMQRSAAGTSTRSMGG.

It belongs to the UPF0441 family.

This is UPF0441 protein YgiB from Salmonella paratyphi B (strain ATCC BAA-1250 / SPB7).